The primary structure comprises 985 residues: MATSVIQFGSFVCNLPKSQPLCTTVHCPKQSMSTNIVRPSDPFAELEKHLEPYLQKRMDATIRQTKGGTLVYKHMSEAKRARKLRKKQREEEEVRLFMNAAPYIVSNITIGGGEVPSKMEEVSIKRPLNKTPSRKIKKSLTPVTFRDGHMNKFLRELRDCATRNSMTVHLIGKRKTELAFKRRASLNAVYATLHHMRGVDRKRDIVLEEWMNDYVLNLSKVSTWGSLFHAESLKRGDSGLILNARALRGKFGRCSRGFFIVRGKSDGVVLDARSKLSMATVTHMEQYSTPEAFWSGLEKKWSVVRKPTAHTCKPTYSVSNCGEVAAIIAQALFPCHKLTCGECSKEICDLTSNECVQELYKNTSLALERMNNLHPEFQHIVKVLSVVRQLTEASNHGTETFDEIFKMIGSKTQSPFTHLNKLNEFMLKGNENTSGEWLTARQHLRELVRFQKNRTDNIKKGDLASFRNKLSARAQYNLYLSCDNQLDKNASFLWGQREYHARRFFLNFFQQIDPSKGYLAYEDRTIPNGSRKLAIGNLIVPLDLAEFRKRMNGIDTQQPPIGKYCTSQLDGNFVYPCCCTTLDDGQPIRSAVYAPTKKHLVVGNTGDTKYINLPKGDTEMLYIALDGYCYINIYLAMLVNISEEEAKDFTKKVRDIFMPKLGKWPTLMDLATTCAQLRIFHPDVHDAELPRILVDHNTQTCHVVDSYGSISTGYHILKAATVSQLVLFADDNLESEIKHYRVGGIVENHKVQIDNQPSRCGVSEFHAIRMLIKGIYRPSVMYELLSEEPYLLVFSILSPSILIAMYNDRAFELAVQIWLEKEQSIPLIATILTNLAAKVSVATTLVQQLQLIELSADQLLNVTCDGFRVSFAYQSALTLLTRMRDQAKANSELISGGFNEYDQDLAWTLEKKLSRPLTRPMERIKLAGKISLLLVLKKAKDSFAVKYQKQKFARCQRNIQFITETIYGKGFLPHESRSSVHQARN.

Positions 144–287 (TFRDGHMNKF…MATVTHMEQY (144 aa)) constitute a Peptidase S30 domain. Catalysis depends on for P1 proteinase activity residues H195, D204, and S238. The Involved in interaction with stylet and aphid transmission signature appears at 337-340 (KLTC). Residues 595–597 (PTK) carry the Involved in virions binding and aphid transmission motif. The region spanning 621 to 743 (LYIALDGYCY…ESEIKHYRVG (123 aa)) is the Peptidase C6 domain. Catalysis depends on for helper component proteinase activity residues C629 and H702.

This sequence belongs to the potyviridae P3N-PIPO polyprotein family. Interacts (via PIPO domain) with host PCaP1 protein; this interaction may help to anchor the movement complex to the plasma membrane from which the complex could move to the plasmodesmata. In terms of processing, potyviral RNA is expressed as two polyproteins which undergo post-translational proteolytic processing. Genome polyprotein is processed by NIa-pro, P1 and HC-pro proteinases resulting in the production of at least ten individual proteins. P3N-PIPO is cleaved by P1 and HC-pro proteinases resulting in the production of three individual proteins. The P1 proteinase and the HC-pro cleave only their respective C-termini autocatalytically.

Its subcellular location is the host cell junction. It localises to the host plasmodesma. It catalyses the reaction Hydrolyzes a Gly-|-Gly bond at its own C-terminus, commonly in the sequence -Tyr-Xaa-Val-Gly-|-Gly, in the processing of the potyviral polyprotein.. In terms of biological role, required for aphid transmission and also has proteolytic activity. Only cleaves a Gly-Gly dipeptide at its own C-terminus. Interacts with virions and aphid stylets. Acts as a suppressor of RNA-mediated gene silencing, also known as post-transcriptional gene silencing (PTGS), a mechanism of plant viral defense that limits the accumulation of viral RNAs. May have RNA-binding activity. Allows efficient cell to cell propagation, by bypassing the host cell wall barrier. Transports viral genome to neighboring plant cells directly through plasmosdesmata, without any budding. The sequence is that of P3N-PIPO polyprotein from Pepper mottle virus (isolate California) (PeMV).